Consider the following 937-residue polypeptide: Glycine dehydrogenase (decarboxylating) (937 aa).

Position 686 is an N6-(pyridoxal phosphate)lysine (Lys686).

This sequence belongs to the GcvP family. The glycine cleavage system is composed of four proteins: P, T, L and H. Requires pyridoxal 5'-phosphate as cofactor.

It catalyses the reaction N(6)-[(R)-lipoyl]-L-lysyl-[glycine-cleavage complex H protein] + glycine + H(+) = N(6)-[(R)-S(8)-aminomethyldihydrolipoyl]-L-lysyl-[glycine-cleavage complex H protein] + CO2. Its function is as follows. The glycine cleavage system catalyzes the degradation of glycine. The P protein binds the alpha-amino group of glycine through its pyridoxal phosphate cofactor; CO(2) is released and the remaining methylamine moiety is then transferred to the lipoamide cofactor of the H protein. The chain is Glycine dehydrogenase (decarboxylating) from Mesorhizobium japonicum (strain LMG 29417 / CECT 9101 / MAFF 303099) (Mesorhizobium loti (strain MAFF 303099)).